Consider the following 104-residue polypeptide: Urease subunit beta (104 aa).

This sequence belongs to the urease beta subunit family. As to quaternary structure, heterotrimer of UreA (gamma), UreB (beta) and UreC (alpha) subunits. Three heterotrimers associate to form the active enzyme.

The protein resides in the cytoplasm. It catalyses the reaction urea + 2 H2O + H(+) = hydrogencarbonate + 2 NH4(+). The protein operates within nitrogen metabolism; urea degradation; CO(2) and NH(3) from urea (urease route): step 1/1. The protein is Urease subunit beta of Rhodococcus jostii (strain RHA1).